Reading from the N-terminus, the 276-residue chain is Undecaprenyl-diphosphatase 1 (276 aa).

Transmembrane regions (helical) follow at residues 44-63 (ALAF…IWEY), 85-105 (VNLL…ADLI), 109-129 (LFNP…MLWA), 183-203 (AATE…AVYS), 214-234 (GDFA…MLAV), and 249-269 (FAWY…LGMI).

The protein belongs to the UppP family.

The protein resides in the cell inner membrane. It catalyses the reaction di-trans,octa-cis-undecaprenyl diphosphate + H2O = di-trans,octa-cis-undecaprenyl phosphate + phosphate + H(+). Catalyzes the dephosphorylation of undecaprenyl diphosphate (UPP). Confers resistance to bacitracin. This chain is Undecaprenyl-diphosphatase 1, found in Stutzerimonas stutzeri (strain A1501) (Pseudomonas stutzeri).